Here is a 798-residue protein sequence, read N- to C-terminus: ABC transporter G family member 4 (798 aa).

The tract at residues Met-1–Gln-51 is disordered. Over residues Ile-12 to Ser-29 the composition is skewed to basic and acidic residues. Residues Arg-30–Asn-41 show a composition bias toward polar residues. A coiled-coil region spans residues Asn-34–Thr-83. Residues Gln-42–Gln-51 are compositionally biased toward low complexity. In terms of domain architecture, ABC transporter spans Ile-211–Pro-464. Gly-253–Ser-260 is a binding site for ATP. 7 helical membrane-spanning segments follow: residues Val-540–Phe-560, Leu-579–Val-599, Ile-628–Leu-648, Ile-656–Met-676, Phe-687–Ile-707, Ser-713–Ile-733, and Ser-771–Tyr-791. One can recognise an ABC transmembrane type-2 domain in the interval Val-540 to Phe-793.

This sequence belongs to the ABC transporter superfamily. ABCG family. Eye pigment precursor importer (TC 3.A.1.204) subfamily.

The protein resides in the membrane. The protein is ABC transporter G family member 4 (abcG4) of Dictyostelium discoideum (Social amoeba).